We begin with the raw amino-acid sequence, 77 residues long: Large ribosomal subunit protein uL29 (77 aa).

It belongs to the universal ribosomal protein uL29 family.

In Mycobacterium bovis (strain ATCC BAA-935 / AF2122/97), this protein is Large ribosomal subunit protein uL29 (rpmC).